The chain runs to 103 residues: Cell division protein FtsB (103 aa).

Topologically, residues 1–3 (MGK) are cytoplasmic. A helical membrane pass occupies residues 4 to 21 (LTLLLLAILVWLQYSLWF). The Periplasmic segment spans residues 22-103 (GKNGIHDYTR…RAQSAGQNNR (82 aa)). A coiled-coil region spans residues 31–71 (RVNNDVAAQQATNAKLKARNDQLFAEIDDLNGGQEALEERA).

It belongs to the FtsB family. As to quaternary structure, part of a complex composed of FtsB, FtsL and FtsQ.

The protein localises to the cell inner membrane. In terms of biological role, essential cell division protein. May link together the upstream cell division proteins, which are predominantly cytoplasmic, with the downstream cell division proteins, which are predominantly periplasmic. In Escherichia coli O81 (strain ED1a), this protein is Cell division protein FtsB.